We begin with the raw amino-acid sequence, 119 residues long: Large ribosomal subunit protein bL20 (119 aa).

This sequence belongs to the bacterial ribosomal protein bL20 family.

Functionally, binds directly to 23S ribosomal RNA and is necessary for the in vitro assembly process of the 50S ribosomal subunit. It is not involved in the protein synthesizing functions of that subunit. The polypeptide is Large ribosomal subunit protein bL20 (Burkholderia cenocepacia (strain HI2424)).